The following is a 1210-amino-acid chain: Epidermal growth factor receptor (1210 aa).

The N-terminal stretch at 1 to 24 is a signal peptide; that stretch reads MRPSGTARTTLLVLLTALCAAGGA. The Extracellular segment spans residues 25–647; sequence LEEKKVCQGT…VWPSGPKIPS (623 aa). Cys31 and Cys58 are oxidised to a cystine. The stretch at 75-300 is one Approximate repeat; sequence DLSFLKTIQE…CVKKCPRNYV (226 aa). 3 N-linked (GlcNAc...) asparagine glycosylation sites follow: Asn128, Asn175, and Asn196. 13 cysteine pairs are disulfide-bonded: Cys157–Cys187, Cys190–Cys199, Cys194–Cys207, Cys215–Cys223, Cys219–Cys231, Cys232–Cys240, Cys236–Cys248, Cys251–Cys260, Cys264–Cys291, Cys295–Cys307, Cys311–Cys326, Cys329–Cys333, and Cys337–Cys362. Residue Ser229 is modified to Phosphoserine. N-linked (GlcNAc...) asparagine glycans are attached at residues Asn352, Asn413, and Asn444. The Approximate repeat unit spans residues 390–600; it reads RELEILKTVK…CVKTCPAGIM (211 aa). 11 disulfides stabilise this stretch: Cys470-Cys499, Cys506-Cys515, Cys510-Cys523, Cys526-Cys535, Cys539-Cys555, Cys558-Cys571, Cys562-Cys579, Cys582-Cys591, Cys595-Cys617, Cys620-Cys628, and Cys624-Cys636. Asn528 carries an N-linked (GlcNAc...) asparagine glycan. Asn568 is a glycosylation site (N-linked (GlcNAc...) asparagine). Residues Asn603 and Asn623 are each glycosylated (N-linked (GlcNAc...) asparagine). The helical transmembrane segment at 648 to 670 threads the bilayer; sequence IATGIVGGLLFIVVVALGIGLFM. The Cytoplasmic segment spans residues 671–1210; that stretch reads RRRHIVRKRT…APPSSEFIGA (540 aa). At Thr680 the chain carries Phosphothreonine; by PKC and PKD/PRKD1. The important for dimerization, phosphorylation and activation stretch occupies residues 690 to 706; that stretch reads LVEPLTPSGEAPNQAHL. Phosphothreonine; by PKD/PRKD1 is present on Thr695. Residue Ser697 is modified to Phosphoserine. Positions 714–981 constitute a Protein kinase domain; the sequence is FKKIKVLGSG…KMARDPQRYL (268 aa). Lys718 participates in a covalent cross-link: Glycyl lysine isopeptide (Lys-Gly) (interchain with G-Cter in ubiquitin). An ATP-binding site is contributed by 720-728; the sequence is LGSGAFGTV. Lys739 participates in a covalent cross-link: Glycyl lysine isopeptide (Lys-Gly) (interchain with G-Cter in ubiquitin). Position 747 (Lys747) interacts with ATP. Position 747 is an N6-(2-hydroxyisobutyryl)lysine (Lys747). Residues Lys756 and Lys759 each participate in a glycyl lysine isopeptide (Lys-Gly) (interchain with G-Cter in ubiquitin) cross-link. 792–793 serves as a coordination point for ATP; the sequence is TQ. Asp839 (proton acceptor) is an active-site residue. Residue Asp857 participates in ATP binding. Residue Lys869 forms a Glycyl lysine isopeptide (Lys-Gly) (interchain with G-Cter in ubiquitin) linkage. Position 871 is a phosphotyrosine (Tyr871). Residues Lys931, Lys962, and Lys972 each participate in a glycyl lysine isopeptide (Lys-Gly) (interchain with G-Cter in ubiquitin) cross-link. 2 positions are modified to phosphoserine: Ser993 and Ser997. 2 positions are modified to phosphotyrosine; by autocatalysis: Tyr1000 and Tyr1018. 2 positions are modified to phosphoserine: Ser1028 and Ser1041. Position 1043 is a phosphothreonine (Thr1043). Ser1044 is subject to Phosphoserine. Cys1051 is lipidated: S-palmitoyl cysteine. Position 1069 is a phosphotyrosine (Tyr1069). A phosphoserine mark is found at Ser1070 and Ser1071. Residues Tyr1092 and Tyr1110 each carry the phosphotyrosine; by autocatalysis modification. A disordered region spans residues 1113–1137; sequence QPLHPAPGRDLHYQNPHSNAVGNPE. The segment covering 1127 to 1137 has biased composition (polar residues); that stretch reads NPHSNAVGNPE. Residue Cys1146 is the site of S-palmitoyl cysteine attachment. A Phosphoserine modification is found at Ser1166. At Tyr1172 the chain carries Phosphotyrosine; by autocatalysis. Tyr1197 carries the phosphotyrosine modification. Arg1199 is modified (omega-N-methylarginine).

It belongs to the protein kinase superfamily. Tyr protein kinase family. EGF receptor subfamily. In terms of assembly, binding of the ligand triggers homo- and/or heterodimerization of the receptor triggering its autophosphorylation. Heterodimer with ERBB2. Forms a complex with CCDC88A/GIV (via SH2-like region) and GNAI3 which leads to enhanced EGFR signaling and triggering of cell migration; binding of CCDC88A requires autophosphorylation of the EGFR C-terminal region, and ligand stimulation is required for recruitment of GNAI3 to the complex. Interacts with ERRFI1; inhibits dimerization of the kinase domain and autophosphorylation. Part of a complex with ERBB2 and either PIK3C2A or PIK3C2B. Interacts with GRB2; an adapter protein coupling the receptor to downstream signaling pathways. Interacts with GAB2; involved in signaling downstream of EGFR. Interacts with STAT3; mediates EGFR downstream signaling in cell proliferation. Interacts with RIPK1; involved in NF-kappa-B activation. Interacts (autophosphorylated) with CBL, CBLB and CBLC; involved in EGFR ubiquitination and regulation; interaction with CBL is reduced in the presence of tensin TNS4. Interacts with SOCS5; regulates EGFR degradation through ELOC- and ELOB-mediated ubiquitination and proteasomal degradation. Interacts with PRMT5; methylates EGFR and enhances interaction with PTPN6. Interacts (phosphorylated) with PTPN6; inhibits EGFR-dependent activation of MAPK/ERK. Interacts with COPG1; essential for regulation of EGF-dependent nuclear transport of EGFR by retrograde trafficking from the Golgi to the ER. Interacts with TNK2; this interaction is dependent on EGF stimulation and kinase activity of EGFR. Interacts with PCNA; positively regulates PCNA. Interacts with PELP1. Interacts with MUC1. Interacts with AP2M1. Interacts with FER. Interacts (via SH2 domains) with GRB2, NCK1 and NCK2. Interacts with EPS8; mediates EPS8 phosphorylation. Interacts with ATXN2. Interacts with GAREM1. Interacts (ubiquitinated) with ANKRD13A/B/D; the interaction is direct and may regulate EGFR internalization after EGF stimulation. Interacts with GPER1; the interaction occurs in an estrogen-dependent manner. Interacts (via C-terminal cytoplasmic kinase domain) with ZPR1 (via zinc fingers). Interacts with RNF115 and RNF126. Interacts with GPRC5A (via its transmembrane domain). Interacts with FAM83B; positively regulates EGFR inducing its autophosphorylation in absence of stimulation by EGF. Interacts with LAPTM4B; positively correlates with EGFR activation. Interacts with STX19. Interacts with CD44. Interacts with PGRMC1; the interaction requires PGRMC1 homodimerization. Interacts with PIKFYVE. Interacts with NEU3. Interacts with TRAF4. Interacts with the ant venom OMEGA-myrmeciitoxin(02)-Mg1a. Interacts with CD82; this interaction facilitates ligand-induced endocytosis of the receptor and its subsequent desensitization. In terms of processing, monoubiquitinated and polyubiquitinated upon EGF stimulation; which does not affect tyrosine kinase activity or signaling capacity but may play a role in lysosomal targeting. Polyubiquitin linkage is mainly through 'Lys-63', but linkage through 'Lys-48', 'Lys-11' and 'Lys-29' also occurs. Deubiquitinated by OTUD7B, preventing degradation. Ubiquitinated by RNF115 and RNF126. Ubiquitinated by ZNRF1 or CBL at different lysines in response to EGF stimulation; leading to recruitment of the ESCRT machinery and subsequent degradation in the lysosomes. Deubiquitinated by UCHL1 leading to the inhibition of its degradation. Phosphorylated on Tyr residues in response to EGF. Phosphorylation at Ser-697 is partial and occurs only if Thr-695 is phosphorylated. Phosphorylation at Thr-680 and Thr-695 by PRKD1 inhibits EGF-induced MAPK8/JNK1 activation. Dephosphorylation by PTPRJ prevents endocytosis and stabilizes the receptor at the plasma membrane. Autophosphorylation at Tyr-1199 is stimulated by methylation at Arg-1199 and enhances interaction with PTPN6. Autophosphorylation at Tyr-1092 and/or Tyr-1110 recruits STAT3. Dephosphorylated by PTPN1 and PTPN2. Post-translationally, palmitoylated on Cys residues by ZDHHC20. Palmitoylation inhibits internalization after ligand binding, and increases the persistence of tyrosine-phosphorylated EGFR at the cell membrane. Palmitoylation increases the amplitude and duration of EGFR signaling. In terms of processing, methylated. Methylation at Arg-1199 by PRMT5 stimulates phosphorylation at Tyr-1197.

Its subcellular location is the cell membrane. It is found in the endoplasmic reticulum membrane. It localises to the golgi apparatus membrane. The protein resides in the nucleus membrane. The protein localises to the endosome. Its subcellular location is the endosome membrane. It is found in the nucleus. The catalysed reaction is L-tyrosyl-[protein] + ATP = O-phospho-L-tyrosyl-[protein] + ADP + H(+). With respect to regulation, endocytosis and inhibition of the activated EGFR by phosphatases like PTPRJ and PTPRK constitute immediate regulatory mechanisms. Upon EGF-binding phosphorylates EPS15 that regulates EGFR endocytosis and activity. Moreover, inducible feedback inhibitors including LRIG1, SOCS4, SOCS5 and ERRFI1 constitute alternative regulatory mechanisms for the EGFR signaling. In terms of biological role, receptor tyrosine kinase binding ligands of the EGF family and activating several signaling cascades to convert extracellular cues into appropriate cellular responses. Known ligands include EGF, TGFA/TGF-alpha, AREG, epigen/EPGN, BTC/betacellulin, epiregulin/EREG and HBEGF/heparin-binding EGF. Ligand binding triggers receptor homo- and/or heterodimerization and autophosphorylation on key cytoplasmic residues. The phosphorylated receptor recruits adapter proteins like GRB2 which in turn activates complex downstream signaling cascades. Activates at least 4 major downstream signaling cascades including the RAS-RAF-MEK-ERK, PI3 kinase-AKT, PLCgamma-PKC and STATs modules. May also activate the NF-kappa-B signaling cascade. Also directly phosphorylates other proteins like RGS16, activating its GTPase activity and probably coupling the EGF receptor signaling to the G protein-coupled receptor signaling. Also phosphorylates MUC1 and increases its interaction with SRC and CTNNB1/beta-catenin. Positively regulates cell migration via interaction with CCDC88A/GIV which retains EGFR at the cell membrane following ligand stimulation, promoting EGFR signaling which triggers cell migration. Plays a role in enhancing learning and memory performance. Plays a role in mammalian pain signaling (long-lasting hypersensitivity). The polypeptide is Epidermal growth factor receptor (Mus musculus (Mouse)).